Consider the following 233-residue polypeptide: Large ribosomal subunit protein uL1 (233 aa).

This sequence belongs to the universal ribosomal protein uL1 family. In terms of assembly, part of the 50S ribosomal subunit.

Functionally, binds directly to 23S rRNA. The L1 stalk is quite mobile in the ribosome, and is involved in E site tRNA release. Protein L1 is also a translational repressor protein, it controls the translation of the L11 operon by binding to its mRNA. The polypeptide is Large ribosomal subunit protein uL1 (Psychrobacter cryohalolentis (strain ATCC BAA-1226 / DSM 17306 / VKM B-2378 / K5)).